Consider the following 233-residue polypeptide: Large ribosomal subunit protein eL6x (233 aa).

Over residues 48–72 the composition is skewed to basic and acidic residues; sequence HDAKSKVDAPVEKPPKFYPAEDVKK. The tract at residues 48-80 is disordered; the sequence is HDAKSKVDAPVEKPPKFYPAEDVKKPLPNRRTA.

This sequence belongs to the eukaryotic ribosomal protein eL6 family.

This Arabidopsis thaliana (Mouse-ear cress) protein is Large ribosomal subunit protein eL6x (RPL6C).